Here is a 144-residue protein sequence, read N- to C-terminus: uncharacterized protein (144 aa).

Helical transmembrane passes span Leu-76 to Leu-96 and Ile-105 to Tyr-125.

Belongs to the RseC family.

Its subcellular location is the cell inner membrane. This is an uncharacterized protein from Haemophilus influenzae (strain ATCC 51907 / DSM 11121 / KW20 / Rd).